Consider the following 253-residue polypeptide: 5-oxoprolinase subunit A (253 aa).

This sequence belongs to the LamB/PxpA family. In terms of assembly, forms a complex composed of PxpA, PxpB and PxpC.

It carries out the reaction 5-oxo-L-proline + ATP + 2 H2O = L-glutamate + ADP + phosphate + H(+). Its function is as follows. Catalyzes the cleavage of 5-oxoproline to form L-glutamate coupled to the hydrolysis of ATP to ADP and inorganic phosphate. The protein is 5-oxoprolinase subunit A of Bacillus cereus (strain AH187).